The chain runs to 193 residues: Acyl carrier protein phosphodiesterase (193 aa).

This sequence belongs to the AcpH family.

It carries out the reaction holo-[ACP] + H2O = apo-[ACP] + (R)-4'-phosphopantetheine + H(+). In terms of biological role, converts holo-ACP to apo-ACP by hydrolytic cleavage of the phosphopantetheine prosthetic group from ACP. The chain is Acyl carrier protein phosphodiesterase from Escherichia coli O157:H7.